A 95-amino-acid chain; its full sequence is Co-chaperonin GroES (95 aa).

It belongs to the GroES chaperonin family. Heptamer of 7 subunits arranged in a ring. Interacts with the chaperonin GroEL.

It is found in the cytoplasm. Functionally, together with the chaperonin GroEL, plays an essential role in assisting protein folding. The GroEL-GroES system forms a nano-cage that allows encapsulation of the non-native substrate proteins and provides a physical environment optimized to promote and accelerate protein folding. GroES binds to the apical surface of the GroEL ring, thereby capping the opening of the GroEL channel. In Clostridium botulinum (strain ATCC 19397 / Type A), this protein is Co-chaperonin GroES.